The following is a 151-amino-acid chain: Macrodomain Ter protein (151 aa).

This sequence belongs to the MatP family. Homodimer.

The protein resides in the cytoplasm. Its function is as follows. Required for spatial organization of the terminus region of the chromosome (Ter macrodomain) during the cell cycle. Prevents early segregation of duplicated Ter macrodomains during cell division. Binds specifically to matS, which is a 13 bp signature motif repeated within the Ter macrodomain. This is Macrodomain Ter protein from Vibrio atlanticus (strain LGP32) (Vibrio splendidus (strain Mel32)).